The chain runs to 498 residues: Probable cytosol aminopeptidase (498 aa).

The Mn(2+) site is built by K262 and D267. K274 is an active-site residue. Residues D285, D344, and E346 each contribute to the Mn(2+) site. Residue R348 is part of the active site.

This sequence belongs to the peptidase M17 family. Mn(2+) is required as a cofactor.

It is found in the cytoplasm. It catalyses the reaction Release of an N-terminal amino acid, Xaa-|-Yaa-, in which Xaa is preferably Leu, but may be other amino acids including Pro although not Arg or Lys, and Yaa may be Pro. Amino acid amides and methyl esters are also readily hydrolyzed, but rates on arylamides are exceedingly low.. The enzyme catalyses Release of an N-terminal amino acid, preferentially leucine, but not glutamic or aspartic acids.. In terms of biological role, presumably involved in the processing and regular turnover of intracellular proteins. Catalyzes the removal of unsubstituted N-terminal amino acids from various peptides. The polypeptide is Probable cytosol aminopeptidase (Phytoplasma mali (strain AT)).